Consider the following 300-residue polypeptide: ATP-dependent (S)-NAD(P)H-hydrate dehydratase (300 aa).

Residues 7 to 289 enclose the YjeF C-terminal domain; that stretch reads IEARLKSIIP…ESIPSVFDQV (283 aa). (6S)-NADPHX is bound by residues Gly107 and 160–166; that span reads NVMEYRR. ATP-binding positions include 194–198 and 213–222; these read KGQVD and GSPRRCGGQG. (6S)-NADPHX is bound at residue Asp223.

Belongs to the NnrD/CARKD family. Mg(2+) is required as a cofactor.

It catalyses the reaction (6S)-NADHX + ATP = ADP + phosphate + NADH + H(+). It carries out the reaction (6S)-NADPHX + ATP = ADP + phosphate + NADPH + H(+). In terms of biological role, catalyzes the dehydration of the S-form of NAD(P)HX at the expense of ATP, which is converted to ADP. Together with NAD(P)HX epimerase, which catalyzes the epimerization of the S- and R-forms, the enzyme allows the repair of both epimers of NAD(P)HX, a damaged form of NAD(P)H that is a result of enzymatic or heat-dependent hydration. The protein is ATP-dependent (S)-NAD(P)H-hydrate dehydratase of Entamoeba histolytica (strain ATCC 30459 / HM-1:IMSS / ABRM).